The primary structure comprises 39 residues: Potassium channel toxin alpha-KTx 2.17 (39 aa).

3 disulfides stabilise this stretch: C7-C29, C13-C34, and C17-C36. I39 is modified (isoleucine amide).

The protein belongs to the short scorpion toxin superfamily. Potassium channel inhibitor family. Alpha-KTx 02 subfamily. As to expression, expressed by the venom gland.

It is found in the secreted. Its function is as follows. Blocks human voltage-gated potassium channels Kv1.1/KCNA1 (IC(50)=4.8 nM) and Kv1.2/KCNA2 (IC(50)=2.9 nM). The polypeptide is Potassium channel toxin alpha-KTx 2.17 (Centruroides tecomanus (Scorpion)).